The sequence spans 508 residues: Protein disulfide-isomerase (508 aa).

A signal peptide spans 1-17; sequence MLRRALLCLAVAALVRA. A Thioredoxin 1 domain is found at 18–134; that stretch reads DAPEEEDHVL…IVNWLKKRTG (117 aa). Catalysis depends on nucleophile residues Cys-53 and Cys-56. Cys-53 and Cys-56 are oxidised to a cystine. At Lys-200 the chain carries N6-acetyllysine. Residues Lys-222 and Lys-271 each carry the N6-succinyllysine modification. Ser-331 is modified (phosphoserine). Positions 349–475 constitute a Thioredoxin 2 domain; that stretch reads GKIKPHLMSQ…FKKFLESGGQ (127 aa). At Ser-357 the chain carries Phosphoserine; by FAM20C. Catalysis depends on nucleophile residues Cys-397 and Cys-400. Cys-397 and Cys-400 are joined by a disulfide. At Ser-427 the chain carries Phosphoserine. The disordered stretch occupies residues 471–508; it reads ESGGQDGAGDDDDLEDLEEAEEPDMEEDDDQKAVKDEL. Residues 478-500 show a composition bias toward acidic residues; it reads AGDDDDLEDLEEAEEPDMEEDDD. Residues 505 to 508 carry the Prevents secretion from ER motif; sequence KDEL.

The protein belongs to the protein disulfide isomerase family. As to quaternary structure, heterodimer; heterodimerizes with the protein microsomal triglyceride transfer MTTP. Homodimer. Monomers and homotetramers may also occur. Interacts with P4HA2, forming a heterotetramer consisting of 2 alpha subunits (P4HA2) and 2 beta (P4HB), where P4HB plays the role of a structural subunit; this tetramer catalyzes the formation of 4-hydroxyproline in collagen. Also constitutes the structural subunit of the microsomal triacylglycerol transfer protein MTTP in mammalian cells. Stabilizes both enzymes and retain them in the ER without contributing to the catalytic activity. Binds UBQLN1. Interacts with ERO1B. Binds to CD4, and upon HIV-1 binding to the cell membrane, is part of a P4HB/PDI-CD4-CXCR4-gp120 complex. Interacts with ILDR2. Interacts with ERN1/IRE1A (via N-terminus); the interaction is enhanced by phosphorylation of P4HB by FAM20C in response to endoplasmic reticulum stress and results in attenuation of ERN1 activity. Phosphorylation of Ser-357 by FAM20C is induced by endoplasmic reticulum stress and results in a functional switch from oxidoreductase to molecular chaperone. It also promotes interaction with ERN1.

It is found in the endoplasmic reticulum. The protein resides in the endoplasmic reticulum lumen. The protein localises to the melanosome. Its subcellular location is the cell membrane. It carries out the reaction Catalyzes the rearrangement of -S-S- bonds in proteins.. Its function is as follows. This multifunctional protein catalyzes the formation, breakage and rearrangement of disulfide bonds. At the cell surface, seems to act as a reductase that cleaves disulfide bonds of proteins attached to the cell. May therefore cause structural modifications of exofacial proteins. Inside the cell, seems to form/rearrange disulfide bonds of nascent proteins. At high concentrations and following phosphorylation by FAM20C, functions as a chaperone that inhibits aggregation of misfolded proteins. At low concentrations, facilitates aggregation (anti-chaperone activity). May be involved with other chaperones in the structural modification of the TG precursor in hormone biogenesis. Also acts as a structural subunit of various enzymes such as prolyl 4-hydroxylase and microsomal triacylglycerol transfer protein MTTP. Receptor for LGALS9; the interaction retains P4HB at the cell surface of Th2 T helper cells, increasing disulfide reductase activity at the plasma membrane, altering the plasma membrane redox state and enhancing cell migration. This chain is Protein disulfide-isomerase (P4HB), found in Homo sapiens (Human).